A 252-amino-acid chain; its full sequence is Phosphate import ATP-binding protein PstB (252 aa).

The region spanning 5–247 (LIASDVNIFY…PRDERTEAYV (243 aa)) is the ABC transporter domain. 37 to 44 (GPSGCGKT) serves as a coordination point for ATP.

This sequence belongs to the ABC transporter superfamily. Phosphate importer (TC 3.A.1.7) family. As to quaternary structure, the complex is composed of two ATP-binding proteins (PstB), two transmembrane proteins (PstC and PstA) and a solute-binding protein (PstS).

The protein resides in the cell membrane. The enzyme catalyses phosphate(out) + ATP + H2O = ADP + 2 phosphate(in) + H(+). Part of the ABC transporter complex PstSACB involved in phosphate import. Responsible for energy coupling to the transport system. This is Phosphate import ATP-binding protein PstB from Deinococcus geothermalis (strain DSM 11300 / CIP 105573 / AG-3a).